The following is a 158-amino-acid chain: Probable cyclic pyranopterin monophosphate synthase (158 aa).

Substrate is bound by residues 78 to 80 (MCH) and 114 to 115 (ME). Asp-129 is an active-site residue.

It belongs to the MoaC family. In terms of assembly, homohexamer; trimer of dimers.

The catalysed reaction is (8S)-3',8-cyclo-7,8-dihydroguanosine 5'-triphosphate = cyclic pyranopterin phosphate + diphosphate. Its pathway is cofactor biosynthesis; molybdopterin biosynthesis. Catalyzes the conversion of (8S)-3',8-cyclo-7,8-dihydroguanosine 5'-triphosphate to cyclic pyranopterin monophosphate (cPMP). In Methanosarcina acetivorans (strain ATCC 35395 / DSM 2834 / JCM 12185 / C2A), this protein is Probable cyclic pyranopterin monophosphate synthase.